Here is a 704-residue protein sequence, read N- to C-terminus: Arylphorin (704 aa).

A signal peptide spans 1-16; that stretch reads MKIVLVLAGLIALVQS. 3 N-linked (GlcNAc...) asparagine glycosylation sites follow: N73, N212, and N360.

The protein belongs to the hemocyanin family. Homohexamer of two stacked trimers; disulfide-linked. Glycosylation at Asn-360 is required for proper folding.

It localises to the secreted. The protein localises to the extracellular space. Functionally, arylphorin is a larval storage protein (LSP) which may serve as a storage protein used primarily as a source of aromatic amino acids for protein synthesis during metamorphosis. It is a constituent of the sclerotizing system of the cuticle, and serves as a carrier for ecdysteroid hormone. The sequence is that of Arylphorin from Antheraea pernyi (Chinese oak silk moth).